The following is a 504-amino-acid chain: Maturase K (504 aa).

Belongs to the intron maturase 2 family. MatK subfamily.

It is found in the plastid. The protein resides in the chloroplast. In terms of biological role, usually encoded in the trnK tRNA gene intron. Probably assists in splicing its own and other chloroplast group II introns. This is Maturase K from Fagus japonica (Japanese beech).